A 156-amino-acid chain; its full sequence is Transcription elongation factor GreA (156 aa).

The stretch at 46-66 forms a coiled coil; that stretch reads AEYHSAREKQSFIEGRIKELE.

The protein belongs to the GreA/GreB family.

Its function is as follows. Necessary for efficient RNA polymerase transcription elongation past template-encoded arresting sites. The arresting sites in DNA have the property of trapping a certain fraction of elongating RNA polymerases that pass through, resulting in locked ternary complexes. Cleavage of the nascent transcript by cleavage factors such as GreA or GreB allows the resumption of elongation from the new 3'terminus. GreA releases sequences of 2 to 3 nucleotides. This Ruegeria pomeroyi (strain ATCC 700808 / DSM 15171 / DSS-3) (Silicibacter pomeroyi) protein is Transcription elongation factor GreA.